Consider the following 197-residue polypeptide: Putative double homeobox protein 3 (197 aa).

DNA-binding regions (homeobox) lie at residues 46–105 (GRRM…LRQH) and 121–180 (GRRK…WGQS). The segment at 102 to 127 (LRQHRRQSRPWPGRRDPQKGRRKRTA) is disordered.

This sequence belongs to the paired homeobox family. Expressed in hepatoma Hep3B cells.

The protein localises to the nucleus. The polypeptide is Putative double homeobox protein 3 (DUX3) (Homo sapiens (Human)).